Reading from the N-terminus, the 222-residue chain is Charged multivesicular body protein 3 (222 aa).

Gly2 is lipidated: N-myristoyl glycine. An intramolecular interaction with C-terminus region spans residues 2 to 113 (GLFGKTQEKP…LQKSTEVMKA (112 aa)). A coiled-coil region spans residues 22–54 (KIRKEMRVVDRQIRDIQREEEKVKRSVKDAAKK). Important for autoinhibitory function regions lie at residues 59 to 64 (VCVVLA) and 168 to 169 (IL). The stretch at 141–222 (EEMLEDTFES…MQSRLATLRS (82 aa)) forms a coiled coil. The intramolecular interaction with N-terminus stretch occupies residues 151 to 220 (MDDQEEMEEE…EAMQSRLATL (70 aa)). The interval 151-222 (MDDQEEMEEE…MQSRLATLRS (72 aa)) is interaction with VPS4A. Lys179 is covalently cross-linked (Glycyl lysine isopeptide (Lys-Gly) (interchain with G-Cter in ubiquitin)). The tract at residues 180–222 (APSKVTDALPEPEPSGAMAASEDEEEEEEALEAMQSRLATLRS) is disordered. Interaction with STAMBP regions lie at residues 196-222 (AMAA…TLRS), 203-207 (EEEEE), and 221-222 (RS). A Phosphoserine modification is found at Ser200. The span at 200 to 210 (SEDEEEEEEAL) shows a compositional bias: acidic residues. The MIT-interacting motif motif lies at 201–211 (EDEEEEEEALE).

Belongs to the SNF7 family. In terms of assembly, probable core component of the endosomal sorting required for transport complex III (ESCRT-III). ESCRT-III components are thought to multimerize to form a flat lattice on the perimeter membrane of the endosome. Several assembly forms of ESCRT-III may exist that interact and act sequentially. Forms a metastable monomer in solution; its core structure (without part of the putative autoinhibitory C-terminal acidic region) oligomerizes into a flat lattice via two different dimerization interfaces. In vitro, heteromerizes with CHMP2A (but not CHMP4) to form helical tubular structures that expose membrane-interacting sites on the outside whereas VPS4B can associate on the inside of the tubule. May interact with IGFBP7; the relevance of such interaction however remains unclear. Interacts with CHMP2A. Interacts with CHMP4A; the interaction requires the release of CHMP4A autoinhibition. Interacts with VPS4A. Interacts with STAMBP; the interaction appears to relieve the autoinhibition of CHMP3. Interacts with VTA1.

The protein localises to the cytoplasm. The protein resides in the cytosol. Its subcellular location is the membrane. It is found in the endosome. It localises to the late endosome membrane. Its function is as follows. Probable core component of the endosomal sorting required for transport complex III (ESCRT-III) which is involved in multivesicular bodies (MVBs) formation and sorting of endosomal cargo proteins into MVBs. MVBs contain intraluminal vesicles (ILVs) that are generated by invagination and scission from the limiting membrane of the endosome and mostly are delivered to lysosomes enabling degradation of membrane proteins, such as stimulated growth factor receptors, lysosomal enzymes and lipids. The MVB pathway appears to require the sequential function of ESCRT-O, -I,-II and -III complexes. ESCRT-III proteins mostly dissociate from the invaginating membrane before the ILV is released. The ESCRT machinery also functions in topologically equivalent membrane fission events, such as the terminal stages of cytokinesis and the budding of enveloped viruses (lentiviruses). ESCRT-III proteins are believed to mediate the necessary vesicle extrusion and/or membrane fission activities, possibly in conjunction with the AAA ATPase VPS4. Selectively binds to phosphatidylinositol 3,5-bisphosphate PtdIns(3,5)P2 and PtdIns(3,4)P2 in preference to other phosphoinositides tested. Involved in late stages of cytokinesis. Plays a role in endosomal sorting/trafficking of EGF receptor. The chain is Charged multivesicular body protein 3 (CHMP3) from Pongo abelii (Sumatran orangutan).